The sequence spans 410 residues: Acetate kinase (410 aa).

Asparagine 7 contacts Mg(2+). Lysine 14 is a binding site for ATP. Substrate is bound at residue arginine 88. Aspartate 145 (proton donor/acceptor) is an active-site residue. ATP-binding positions include 203–207 (HAGNG), 278–280 (DTR), and 326–330 (GIGEN). A Mg(2+)-binding site is contributed by glutamate 379.

This sequence belongs to the acetokinase family. In terms of assembly, homodimer. It depends on Mg(2+) as a cofactor. Mn(2+) is required as a cofactor.

The protein localises to the cytoplasm. It catalyses the reaction acetate + ATP = acetyl phosphate + ADP. It participates in metabolic intermediate biosynthesis; acetyl-CoA biosynthesis; acetyl-CoA from acetate: step 1/2. Its function is as follows. Catalyzes the formation of acetyl phosphate from acetate and ATP. Can also catalyze the reverse reaction. This is Acetate kinase from Onion yellows phytoplasma (strain OY-M).